A 49-amino-acid chain; its full sequence is Lectin alpha chain (49 aa).

It belongs to the leguminous lectin family. Homotetramer. Post-translationally, the beta and gamma chains are produced by partial proteolytic processing of the lectin alpha chain by an asparaginyl endopeptidase. Mixture of 60% alpha lectin and 40% of its beta and gamma proteolytic fragments. As to expression, seed.

D-mannose/D-glucose-binding lectin. The sequence is that of Lectin alpha chain from Dioclea violacea.